We begin with the raw amino-acid sequence, 93 residues long: Small ribosomal subunit protein uS19 (93 aa).

This sequence belongs to the universal ribosomal protein uS19 family.

In terms of biological role, protein S19 forms a complex with S13 that binds strongly to the 16S ribosomal RNA. The sequence is that of Small ribosomal subunit protein uS19 from Karelsulcia muelleri (strain GWSS) (Sulcia muelleri).